Here is a 551-residue protein sequence, read N- to C-terminus: MADGVDHIDIYADVGEEFNQEAEYGGHDQIDLYDDVISPSANNGDAPEDRDYMDTLPPTVGDDVGKGAAPNVVYTYTGKRIALYIGNLTWWTTDEDLTEAVHSLGVNDILEIKFFENRANGQSKGFALVGVGSEASSKKLMDLLPKRELHGQNPVVTPCNKQFLSQFEMQSRKTTQSGQMSGEGKAGPPGGSSRAAFPQGGRGRGRFPGAVPGGDRFPGPAGPGGPPPPFPAGQTPPRPPLCPPGPPGPPGPPPPGQVLPPPLAGPPNRGDRPPPPVLFPGQPFGQPPLGPLPPGPPPPVPGYGPPPGPPPPQQGPPPPPGPFPPRPPGPLGPPLTLAPPPHLPGPPPGAPPPAPHVNPAFFPPPTNSGMPTSDSRGPPPTDPYGRPPPYDRGDYGPPGREMDTARTPLSEAEFEEIMNRNRAISSSAISRAVSDASAGDYGSAIETLVTAISLIKQSKVSADDRCKVLISSLQDCLHGIESKSYGSGSRRERSRERDHSRSREKSRRHKSRSRDRHDDYYRERSRERERHRDRDRDRDRERDREREYRHR.

A necessary for interaction with NXF1 region spans residues 1 to 213 (MADGVDHIDI…RGRFPGAVPG (213 aa)). The RRM domain maps to 81–161 (IALYIGNLTW…QNPVVTPCNK (81 aa)). The necessary for interaction with NUDT21/CPSF5 stretch occupies residues 81–161 (IALYIGNLTW…QNPVVTPCNK (81 aa)). The segment at 81 to 161 (IALYIGNLTW…QNPVVTPCNK (81 aa)) is necessary for nuclear paraspeckles localization. A Phosphothreonine modification is found at Thr-157. Residues 169 to 180 (MQSRKTTQSGQM) show a composition bias toward polar residues. 2 disordered regions span residues 169 to 411 (MQSR…PLSE) and 477 to 551 (LHGI…YRHR). Positions 202–206 (RGRGR) match the GAR motif. A compositionally biased stretch (low complexity) spans 207 to 219 (FPGAVPGGDRFPG). Composition is skewed to pro residues over residues 220-265 (PAGP…PLAG), 285-366 (GQPP…PPPT), and 377-388 (GPPPTDPYGRPP). Over residues 389–404 (PYDRGDYGPPGREMDT) the composition is skewed to basic and acidic residues. A phosphothreonine mark is found at Thr-404 and Thr-407. The sufficient for nuclear speckle localization stretch occupies residues 404-551 (TARTPLSEAE…RDREREYRHR (148 aa)). The tract at residues 405-551 (ARTPLSEAEF…RDREREYRHR (147 aa)) is necessary for RNA-binding. A necessary for interaction with SRSF3, SRSF7 and TRA2B/SFRS10 region spans residues 481–551 (ESKSYGSGSR…RDREREYRHR (71 aa)). Over residues 489–503 (SRRERSRERDHSRSR) the composition is skewed to basic and acidic residues. The interval 490–551 (RRERSRERDH…RDREREYRHR (62 aa)) is arg/Ser-rich domain. Phosphoserine is present on residues Ser-494, Ser-500, Ser-511, Ser-513, and Ser-525. The segment covering 504-514 (EKSRRHKSRSR) has biased composition (basic residues). Positions 510–551 (KSRSRDRHDDYYRERSRERERHRDRDRDRDRERDREREYRHR) are sufficient for nuclear targeting. A compositionally biased stretch (basic and acidic residues) spans 515–551 (DRHDDYYRERSRERERHRDRDRDRDRERDREREYRHR).

The protein belongs to the RRM CPSF6/7 family. Component of the cleavage factor Im (CFIm) complex which is a heterotetramer composed of two subunits of NUDT21/CPSF5 and two subunits of CPSF6 or CPSF7 or a heterodimer of CPSF6 and CPSF7. The cleavage factor Im (CFIm) complex associates with the CPSF and CSTF complexes to promote the assembly of the core mRNA 3'-processing machinery. Associates with the exon junction complex (EJC). Associates with the 80S ribosome particle. Interacts (via the RRM domain) with NUDT21/CPSF5; this interaction is direct and enhances binding to RNA. Interacts (via Arg/Ser-rich domain) with FIP1L1 (preferentially via unphosphorylated form and Arg/Glu/Asp-rich domain); this interaction mediates, at least in part, the interaction between the CFIm and CPSF complexes and may be inhibited by CPSF6 hyper-phosphorylation. Interacts (via N-terminus) with NXF1; this interaction is direct. Interacts with SRSF3. Interacts with SRSF7. Interacts with SNRNP70. Interacts with TRA2B/SFRS10. Interacts with UPF1. Interacts with UPF3B. Interacts with VIRMA. Interacts (via Arg/Ser-rich domain) with TNPO3; promoting nuclear import of CPSF6 independently of its phosphorylation status. Interacts with YTHDC1. Post-translationally, phosphorylated. Phosphorylated in the Arg/Ser-rich domain by SRPK1, in vitro. Symmetrically dimethylated on arginine residues in the GAR motif by PRMT5 in a WDR77- and CLNS1A-dependent manner. Asymmetrically dimethylated on arginine residues in the GAR motif by PRMT1.

Its subcellular location is the nucleus. The protein localises to the nucleoplasm. It localises to the nucleus speckle. It is found in the cytoplasm. Component of the cleavage factor Im (CFIm) complex that functions as an activator of the pre-mRNA 3'-end cleavage and polyadenylation processing required for the maturation of pre-mRNA into functional mRNAs. CFIm contributes to the recruitment of multiprotein complexes on specific sequences on the pre-mRNA 3'-end, so called cleavage and polyadenylation signals (pA signals). Most pre-mRNAs contain multiple pA signals, resulting in alternative cleavage and polyadenylation (APA) producing mRNAs with variable 3'-end formation. The CFIm complex acts as a key regulator of cleavage and polyadenylation site choice during APA through its binding to 5'-UGUA-3' elements localized in the 3'-untranslated region (UTR) for a huge number of pre-mRNAs. CPSF6 enhances NUDT21/CPSF5 binding to 5'-UGUA-3' elements localized upstream of pA signals and promotes RNA looping, and hence activates directly the mRNA 3'-processing machinery. Plays a role in mRNA export. In Bos taurus (Bovine), this protein is Cleavage and polyadenylation specificity factor subunit 6.